A 446-amino-acid chain; its full sequence is Methionine aminopeptidase 2 (446 aa).

The disordered stretch occupies residues Met1 to Phe91. A compositionally biased stretch (acidic residues) spans Glu36–Val48. Over residues Lys59–Ala72 the composition is skewed to basic residues. His199 is a binding site for substrate. A divalent metal cation-binding residues include Asp219, Asp230, and His299. Residue His307 participates in substrate binding. A divalent metal cation-binding residues include Glu332 and Glu427.

This sequence belongs to the peptidase M24A family. Methionine aminopeptidase eukaryotic type 2 subfamily. Co(2+) is required as a cofactor. Requires Zn(2+) as cofactor. The cofactor is Mn(2+). Fe(2+) serves as cofactor.

Its subcellular location is the cytoplasm. It catalyses the reaction Release of N-terminal amino acids, preferentially methionine, from peptides and arylamides.. Its function is as follows. Cotranslationally removes the N-terminal methionine from nascent proteins. The N-terminal methionine is often cleaved when the second residue in the primary sequence is small and uncharged (Met-Ala-, Cys, Gly, Pro, Ser, Thr, or Val). This chain is Methionine aminopeptidase 2, found in Sclerotinia sclerotiorum (strain ATCC 18683 / 1980 / Ss-1) (White mold).